The primary structure comprises 850 residues: Pentatricopeptide repeat-containing protein At3g49170, chloroplastic (850 aa).

The transit peptide at 1 to 50 directs the protein to the chloroplast; sequence MAMISFSFPSPAKLPIKSQPSVSNRINVADRLILRHLNAGDLRGAVSALD. PPR repeat units lie at residues 61–95, 96–130, 131–164, 165–199, 201–232, 233–267, 268–302, 303–334, 335–370, 372–406, 407–437, 438–472, 473–507, 508–538, 539–573, 574–609, and 610–640; these read DSVT…DIEP, DSVL…GKRD, VVSW…GLVP, NDYC…GHFE, DVCV…MSEL, NVVT…GFES, DKFT…GLVD, DVEC…MEDH, SVMS…GHVE, NHFT…GLAS, NSSV…LSEK, NLVS…ELGV, SAFT…GLSC, NQPV…MENR, NVIS…GVKP, NEVT…KIKP, and KMEH…MPFQ. Residues 645-720 are type E motif; the sequence is VWRTFLGACR…EGGCSWIEVG (76 aa). The type E(+) motif stretch occupies residues 721–751; the sequence is DKIHKFYVGDTAHPNAHQIYDELDRLITEIK. Positions 752–850 are type DYW motif; the sequence is RCGYVPDTDL…DGKCSCNDYW (99 aa).

The protein belongs to the PPR family. PCMP-H subfamily.

Its subcellular location is the plastid. It is found in the chloroplast. In terms of biological role, may play a role in embryogenesis. In Arabidopsis thaliana (Mouse-ear cress), this protein is Pentatricopeptide repeat-containing protein At3g49170, chloroplastic (EMB2261).